A 28-amino-acid polypeptide reads, in one-letter code: uncharacterized protein (28 aa).

Positions 1 to 18 (MLPRKYKPAYKKQAHRVK) are enriched in basic residues. A disordered region spans residues 1 to 28 (MLPRKYKPAYKKQAHRVKSNPQPAYTFQ). Residues 19 to 28 (SNPQPAYTFQ) are compositionally biased toward polar residues.

This is an uncharacterized protein from Saccharomyces cerevisiae (strain ATCC 204508 / S288c) (Baker's yeast).